Here is a 429-residue protein sequence, read N- to C-terminus: L-dopachrome tautomerase yellow-f (429 aa).

The first 23 residues, 1–23 (MLSLDVLLLCAISGFQLLISADG), serve as a signal peptide directing secretion. N-linked (GlcNAc...) asparagine glycosylation is found at asparagine 133 and asparagine 372.

It belongs to the major royal jelly protein family.

The protein resides in the secreted. The catalysed reaction is L-dopachrome = 5,6-dihydroxyindole-2-carboxylate. Its pathway is pigment biosynthesis; melanin biosynthesis. In terms of biological role, tautomerization of L-dopachrome with decarboxylation to give 5,6-dihydroxyindole (DHI). Also catalyzes the tautomerization of the methyl ester of L-dopachrome and dopamine chrome. May play a role in melanization reactions during late pupal and adult stages. May play a role in melanization reactions during larval and early pupal stages. This is L-dopachrome tautomerase yellow-f from Drosophila melanogaster (Fruit fly).